The chain runs to 360 residues: Phenylalanine--tRNA ligase alpha subunit (360 aa).

Position 260 (E260) interacts with Mg(2+).

Belongs to the class-II aminoacyl-tRNA synthetase family. Phe-tRNA synthetase alpha subunit type 1 subfamily. Tetramer of two alpha and two beta subunits. The cofactor is Mg(2+).

It localises to the cytoplasm. It catalyses the reaction tRNA(Phe) + L-phenylalanine + ATP = L-phenylalanyl-tRNA(Phe) + AMP + diphosphate + H(+). In Rhodopseudomonas palustris (strain BisB5), this protein is Phenylalanine--tRNA ligase alpha subunit.